The following is a 513-amino-acid chain: MQIVETTNEGLKRAYTVTIPAADIAARVEGEIKKIAPQVRMPGFRPGKVPANLVRKMHGPALHQEALQTTIREAMDKLVADNKLRPAMQPAVSLGEGYDEGKDAELTVELEVLPQIEAPSLDGLKLEKLVVPVTEAEVDEAVARIGQGQKSFTDAKKGAKAKDGDQIIIDFLGKVDGVAFEGGAAEDTPLELGAGRFIPGFEEQLVGVKVGDEKTITVTFPEDYPAENLKGKEATFDITVKAVKNAGEFEANDEFAKMLGLESLEQLKTLLRGQLEQETAGLTRTQMKRALLDQLAAGHDFAVPPSMVEAEFEQIWAQLQQEAQREENPEEALKEIEAEKDDYRKIAERRVRLGLLLSEIGQANGVQVTSQEMEMLIRQAAQQYREQDRQRFVDYVRSEPLAAAQLRAPLYEDKVVDFLFDKAEVTEREVTREELQAAIEAEEGAAAEAKPAKKAPAKKKAAKEEAPAEEAAAEEKPKKAAPKKKAAAADEAPAAEEAPAAKKKAPAKKKAEG.

Residues 164-249 (GDQIIIDFLG…VKAVKNAGEF (86 aa)) enclose the PPIase FKBP-type domain. The tract at residues 436-513 (QAAIEAEEGA…KAPAKKKAEG (78 aa)) is disordered. Basic residues predominate over residues 452 to 461 (AKKAPAKKKA). Residues 489 to 498 (ADEAPAAEEA) are compositionally biased toward low complexity. Residues 501-513 (AKKKAPAKKKAEG) are compositionally biased toward basic residues.

Belongs to the FKBP-type PPIase family. Tig subfamily.

The protein resides in the cytoplasm. The catalysed reaction is [protein]-peptidylproline (omega=180) = [protein]-peptidylproline (omega=0). Functionally, involved in protein export. Acts as a chaperone by maintaining the newly synthesized protein in an open conformation. Functions as a peptidyl-prolyl cis-trans isomerase. The protein is Trigger factor of Novosphingobium aromaticivorans (strain ATCC 700278 / DSM 12444 / CCUG 56034 / CIP 105152 / NBRC 16084 / F199).